The sequence spans 1207 residues: DNA-directed RNA polymerase subunit beta' (1207 aa).

Positions 60, 62, 75, and 78 each coordinate Zn(2+). Residues Asp449, Asp451, and Asp453 each contribute to the Mg(2+) site. Positions 822, 896, 903, and 906 each coordinate Zn(2+).

Belongs to the RNA polymerase beta' chain family. In terms of assembly, the RNAP catalytic core consists of 2 alpha, 1 beta, 1 beta' and 1 omega subunit. When a sigma factor is associated with the core the holoenzyme is formed, which can initiate transcription. The cofactor is Mg(2+). Zn(2+) serves as cofactor.

It carries out the reaction RNA(n) + a ribonucleoside 5'-triphosphate = RNA(n+1) + diphosphate. Functionally, DNA-dependent RNA polymerase catalyzes the transcription of DNA into RNA using the four ribonucleoside triphosphates as substrates. This is DNA-directed RNA polymerase subunit beta' from Staphylococcus saprophyticus subsp. saprophyticus (strain ATCC 15305 / DSM 20229 / NCIMB 8711 / NCTC 7292 / S-41).